Here is a 326-residue protein sequence, read N- to C-terminus: Putative ABC transporter ATP-binding protein MA_4020 (326 aa).

Polar residues predominate over residues 1-12 (MTISTLSSSYGN). The tract at residues 1 to 34 (MTISTLSSSYGNAQDVPAEDSDRHGSIEPGSEKA) is disordered. Residues 46-281 (LEVKNLCHRY…PELLRKAHLR (236 aa)) enclose the ABC transporter domain. 80-87 (GANGAGKS) is an ATP binding site.

This sequence belongs to the ABC transporter superfamily.

Its subcellular location is the cell membrane. In terms of biological role, probably part of an ABC transporter complex. Responsible for energy coupling to the transport system. The protein is Putative ABC transporter ATP-binding protein MA_4020 of Methanosarcina acetivorans (strain ATCC 35395 / DSM 2834 / JCM 12185 / C2A).